Here is a 369-residue protein sequence, read N- to C-terminus: Chorismate synthase (369 aa).

Positions 48 and 54 each coordinate NADP(+). Residues 125-127, 238-239, Gly-278, 293-297, and Arg-319 each bind FMN; these read RSS, NA, and KPTSS.

The protein belongs to the chorismate synthase family. As to quaternary structure, homotetramer. FMNH2 serves as cofactor.

It carries out the reaction 5-O-(1-carboxyvinyl)-3-phosphoshikimate = chorismate + phosphate. Its pathway is metabolic intermediate biosynthesis; chorismate biosynthesis; chorismate from D-erythrose 4-phosphate and phosphoenolpyruvate: step 7/7. In terms of biological role, catalyzes the anti-1,4-elimination of the C-3 phosphate and the C-6 proR hydrogen from 5-enolpyruvylshikimate-3-phosphate (EPSP) to yield chorismate, which is the branch point compound that serves as the starting substrate for the three terminal pathways of aromatic amino acid biosynthesis. This reaction introduces a second double bond into the aromatic ring system. This Burkholderia mallei (strain NCTC 10229) protein is Chorismate synthase.